A 196-amino-acid chain; its full sequence is Small ribosomal subunit protein uS4c (196 aa).

The segment at 16-36 (GTLPGLTSKRPKSGSDLKTQL) is disordered. Residues 89–150 (MRLDNILFRL…KQRSKALIQN (62 aa)) form the S4 RNA-binding domain.

Belongs to the universal ribosomal protein uS4 family. As to quaternary structure, part of the 30S ribosomal subunit. Contacts protein S5. The interaction surface between S4 and S5 is involved in control of translational fidelity.

It localises to the plastid. It is found in the chloroplast. Its function is as follows. One of the primary rRNA binding proteins, it binds directly to 16S rRNA where it nucleates assembly of the body of the 30S subunit. In terms of biological role, with S5 and S12 plays an important role in translational accuracy. This Rhapis humilis (Slender lady palm) protein is Small ribosomal subunit protein uS4c (rps4).